A 142-amino-acid chain; its full sequence is Large ribosomal subunit protein uL13 (142 aa).

The protein belongs to the universal ribosomal protein uL13 family. Part of the 50S ribosomal subunit.

In terms of biological role, this protein is one of the early assembly proteins of the 50S ribosomal subunit, although it is not seen to bind rRNA by itself. It is important during the early stages of 50S assembly. This Francisella philomiragia subsp. philomiragia (strain ATCC 25017 / CCUG 19701 / FSC 153 / O#319-036) protein is Large ribosomal subunit protein uL13.